Consider the following 411-residue polypeptide: Putative competence-damage inducible protein (411 aa).

It belongs to the CinA family.

This is Putative competence-damage inducible protein from Alkaliphilus metalliredigens (strain QYMF).